We begin with the raw amino-acid sequence, 222 residues long: Twisted gastrulation protein homolog 1 (222 aa).

An N-terminal signal peptide occupies residues M1–S24. N80 and N146 each carry an N-linked (GlcNAc...) asparagine glycan.

It belongs to the twisted gastrulation protein family. In terms of assembly, interacts with CHRD and/or BMP4. This interaction enhances CHRD/BMP4 complex formation. Interacts with BMP7. Expressed in lymph node, liver, kidney, and lung. Expression in the kidney was stronger in the medulla than in the cortex, particularly in the cells surrounding the medullary tubules. Expressed in growth plate cartilage of long bones, ribs, and digits and to a lesser extent also in the resting zone of the epiphysis, trabecular bone, and vertebral cartilage. Expression seems to be absent from other skeletal tissues including muscle, skin, and fibroblasts.

The protein localises to the secreted. Its function is as follows. May be involved in dorsoventral axis formation. Seems to antagonize BMP signaling by forming ternary complexes with CHRD and BMPs, thereby preventing BMPs from binding to their receptors. In addition to the anti-BMP function, also has pro-BMP activity, partly mediated by cleavage and degradation of CHRD, which releases BMPs from ternary complexes. May be an important modulator of BMP-regulated cartilage development and chondrocyte differentiation. May play a role in thymocyte development. This chain is Twisted gastrulation protein homolog 1 (Twsg1), found in Mus musculus (Mouse).